Here is a 507-residue protein sequence, read N- to C-terminus: Prolyl carboxy peptidase like protein 5 (507 aa).

Positions 1-16 (MNIFISLAILIATTHC) are cleaved as a signal peptide. N-linked (GlcNAc...) asparagine glycosylation occurs at N125. S172 (charge relay system) is an active-site residue. N332 and N407 each carry an N-linked (GlcNAc...) asparagine glycan. Residues D439 and H466 each act as charge relay system in the active site.

The protein belongs to the peptidase S28 family.

This Caenorhabditis elegans protein is Prolyl carboxy peptidase like protein 5.